A 94-amino-acid chain; its full sequence is Pyrimidine/purine nucleoside phosphorylase (94 aa).

This sequence belongs to the nucleoside phosphorylase PpnP family.

It carries out the reaction a purine D-ribonucleoside + phosphate = a purine nucleobase + alpha-D-ribose 1-phosphate. It catalyses the reaction adenosine + phosphate = alpha-D-ribose 1-phosphate + adenine. The enzyme catalyses cytidine + phosphate = cytosine + alpha-D-ribose 1-phosphate. The catalysed reaction is guanosine + phosphate = alpha-D-ribose 1-phosphate + guanine. It carries out the reaction inosine + phosphate = alpha-D-ribose 1-phosphate + hypoxanthine. It catalyses the reaction thymidine + phosphate = 2-deoxy-alpha-D-ribose 1-phosphate + thymine. The enzyme catalyses uridine + phosphate = alpha-D-ribose 1-phosphate + uracil. The catalysed reaction is xanthosine + phosphate = alpha-D-ribose 1-phosphate + xanthine. In terms of biological role, catalyzes the phosphorolysis of diverse nucleosides, yielding D-ribose 1-phosphate and the respective free bases. Can use uridine, adenosine, guanosine, cytidine, thymidine, inosine and xanthosine as substrates. Also catalyzes the reverse reactions. The polypeptide is Pyrimidine/purine nucleoside phosphorylase (Escherichia coli (strain ATCC 8739 / DSM 1576 / NBRC 3972 / NCIMB 8545 / WDCM 00012 / Crooks)).